The following is a 364-amino-acid chain: Mitoferrin-2 (364 aa).

Positions 1 to 17 (MELEGRGAGGVAGGPAA) are enriched in gly residues. 2 disordered regions span residues 1–28 (MELE…ESAL) and 40–60 (GAGG…PDSG). The span at 18-27 (GPGRSPGESA) shows a compositional bias: low complexity. Solcar repeat units follow at residues 70–158 (ATVT…LKKT), 168–252 (NSHI…LQEH), and 259–352 (YNPS…FKYL). Helical transmembrane passes span 72-91 (VTTH…CVMY), 133-152 (GLNV…FACY), 170-189 (HIAN…AAMN), 227-246 (SYTT…FMTY), 261-280 (PSSH…AATT), and 327-346 (GVQA…WSVY).

The protein belongs to the mitochondrial carrier (TC 2.A.29) family. As to expression, ubiquitous. Expressed in placenta, lung, kidney, pancreas, liver, brain, skeletal muscle and heart.

It is found in the mitochondrion inner membrane. The enzyme catalyses Fe(2+)(in) = Fe(2+)(out). Functionally, mitochondrial iron transporter that mediates iron uptake. Probably required for heme synthesis of hemoproteins and Fe-S cluster assembly in non-erythroid cells. In Homo sapiens (Human), this protein is Mitoferrin-2 (SLC25A28).